The following is a 106-amino-acid chain: GDPVAPSVLLFPPSKEELTTGTATIVCVANKFYPSDITVTWKVDGTTQQSGIENSKTPQSPEDNTYSLSSTLSLTSAQYNSHSVYTCEVVQGSASPIVQSFNRGDC.

The region spanning 6 to 99 (PSVLLFPPSK…VQGSASPIVQ (94 aa)) is the Ig-like domain. An intrachain disulfide couples Cys-27 to Cys-87. The segment covering 48 to 64 (QQSGIENSKTPQSPEDN) has biased composition (polar residues). The disordered stretch occupies residues 48–67 (QQSGIENSKTPQSPEDNTYS).

In Oryctolagus cuniculus (Rabbit), this protein is Ig kappa-b4 chain C region (K-BAS).